Here is a 590-residue protein sequence, read N- to C-terminus: MKNTQAPSAMPIHKYRPFHEQIAVDLPDRTWPAKRIAVAPRWCAVDLRDGNQALIDPMSPERKRIMFDLLVRMGYKEIEVGFPSASQTDFDFVRSLIEENAIPDDVTIQVLTQAREHLIKRTYDSLVGAKRAIVHLYNSTSVLQREVVFRSDRQGIVDIALAGARLCRQFEALAPGTEIYYEYSPESYTGTELEFAADICNQALEVFEPTPERKVIINLPATVEMATPNVYADSIEWMSRHLNHRENVILSLHPHNDRGTAVAAAELGYLAGADRIEGCLFGNGERTGNVDLVTLGVNLFTQGIDPQIDFSDIDHIKRTVEHCNQLPVGERSPWGGDLVFTAFSGSHQDAIKKGFEAMAARAQRESVDVDDLVWAVPYLPIDPKDLGRSYEAVIRVNSQSGKGGVAYLLKSDHALDLPRKLQIEFSGVVQAKTDAEGGEVTSNEIWAIFQDEYLPAPETESDAKWGRFELGSTSTANENGDHVTLTVTLRDGETVSKATGEGNGPIAAFFDILNARGINVHLYDYSQHTLSASESATAAAYVEVNVDGRRLWGVGIDADTTTASFKAVISAVNRSVRASASSVPAELAGV.

The Pyruvate carboxyltransferase domain occupies 40-314; that stretch reads PRWCAVDLRD…DPQIDFSDID (275 aa). 4 residues coordinate Mg(2+): D49, H253, H255, and N289. Positions 456–590 are regulatory domain; that stretch reads APETESDAKW…SSVPAELAGV (135 aa).

The protein belongs to the alpha-IPM synthase/homocitrate synthase family. LeuA type 2 subfamily. In terms of assembly, homodimer. It depends on Mg(2+) as a cofactor.

The protein resides in the cytoplasm. It carries out the reaction 3-methyl-2-oxobutanoate + acetyl-CoA + H2O = (2S)-2-isopropylmalate + CoA + H(+). It functions in the pathway amino-acid biosynthesis; L-leucine biosynthesis; L-leucine from 3-methyl-2-oxobutanoate: step 1/4. In terms of biological role, catalyzes the condensation of the acetyl group of acetyl-CoA with 3-methyl-2-oxobutanoate (2-ketoisovalerate) to form 3-carboxy-3-hydroxy-4-methylpentanoate (2-isopropylmalate). This chain is 2-isopropylmalate synthase, found in Leifsonia xyli subsp. xyli (strain CTCB07).